The following is a 507-amino-acid chain: UDP-N-acetylhexosamine pyrophosphorylase-like protein 1 (507 aa).

Residues 111–114 (LAGG) carry the Substrate binding motif. UTP-binding positions include 111 to 114 (LAGG), K125, Q199, and G225. N226 lines the substrate pocket. Residue D256 participates in UTP binding. Residues 306 to 307 (EY) carry the Substrate binding motif. K380 contacts UTP. Residue K410 participates in substrate binding.

Belongs to the UDPGP type 1 family.

The protein is UDP-N-acetylhexosamine pyrophosphorylase-like protein 1 (Uap1l1) of Mus musculus (Mouse).